A 317-amino-acid polypeptide reads, in one-letter code: Acetyl-coenzyme A carboxylase carboxyl transferase subunit beta (317 aa).

The CoA carboxyltransferase N-terminal domain maps to 30 to 299; the sequence is LWTKCVACTA…VLPPLNVREK (270 aa). Residues C34, C37, C53, and C56 each coordinate Zn(2+). The segment at 34-56 adopts a C4-type zinc-finger fold; that stretch reads CVACTALTYTKDLQANQLVCTEC.

This sequence belongs to the AccD/PCCB family. As to quaternary structure, acetyl-CoA carboxylase is a heterohexamer composed of biotin carboxyl carrier protein (AccB), biotin carboxylase (AccC) and two subunits each of ACCase subunit alpha (AccA) and ACCase subunit beta (AccD). It depends on Zn(2+) as a cofactor.

It is found in the cytoplasm. It catalyses the reaction N(6)-carboxybiotinyl-L-lysyl-[protein] + acetyl-CoA = N(6)-biotinyl-L-lysyl-[protein] + malonyl-CoA. It functions in the pathway lipid metabolism; malonyl-CoA biosynthesis; malonyl-CoA from acetyl-CoA: step 1/1. In terms of biological role, component of the acetyl coenzyme A carboxylase (ACC) complex. Biotin carboxylase (BC) catalyzes the carboxylation of biotin on its carrier protein (BCCP) and then the CO(2) group is transferred by the transcarboxylase to acetyl-CoA to form malonyl-CoA. This is Acetyl-coenzyme A carboxylase carboxyl transferase subunit beta from Crocosphaera subtropica (strain ATCC 51142 / BH68) (Cyanothece sp. (strain ATCC 51142)).